We begin with the raw amino-acid sequence, 200 residues long: Acyl-homoserine-lactone synthase (200 aa).

This sequence belongs to the autoinducer synthase family.

The catalysed reaction is a fatty acyl-[ACP] + S-adenosyl-L-methionine = an N-acyl-L-homoserine lactone + S-methyl-5'-thioadenosine + holo-[ACP] + H(+). Functionally, required for the synthesis of BHL (N-butanoyl-L-homoserine lactone). The polypeptide is Acyl-homoserine-lactone synthase (swrI) (Serratia liquefaciens).